Here is a 611-residue protein sequence, read N- to C-terminus: MADKLTRVAIVNSDKCKPKKCRQECKKSCPVVRSGKLCIEVTPESRIAFISEQLCIGCGICPKRCPFGAITIINLPTNLESMITHRYAANSFKLHRLPMPRPGSVLGLVGTNGIGKSTALKILSGKLKPNLGRYDNPPDWEEVIKYFRGSELQNYFTKILEDDLRAVVKPQYVDQIPKAVRTPDKTVKFLIESRKSMDNLDEVLDTLELRHIYDRDVTHLSGGELQRFAIGTVCVQKADVYMFDEPSSYLDVKQRLAAARIIRSLLRPDDYVIVVEHDLSVLDYLSDYVCVLYGQPAVYGVVTLPHSVREGINIFLDGHIPTENLRFREESLTFRMVEGTEDFVAEKSRAFKYPAMEKTLGNFKLRVDAGSFSDSEIIVMMGENGTGKTTFCRLLAGVLKPDGTTRVPEMRISMKPQTITPKFEGTVRQLFFKKIKAAFLSPQFQTDVVKPLKLDDFIDQEVKNLSGGELQRVAIVLALGIPADIYVIDEPSAYLDSEQRIVASRVIKRFIMHAKKTAFIVEHDFIMATYLADRVIVFDGKPGIDAHANKPESLLTGCNTFLKNLDVTFRRDPTNFRPRINKLNSQLDQEQKLSGNYFFLEEGPDKEKERS.

4Fe-4S ferredoxin-type domains follow at residues 7–31 (RVAI…SCPV) and 46–75 (RIAF…IINL). ABC transporter domains lie at 77–318 (TNLE…FLDG) and 345–565 (AEKS…LKNL). Residues 110 to 117 (GTNGIGKS) and 382 to 389 (GENGTGKT) each bind ATP.

Belongs to the ABC transporter superfamily. ABCE family. As to quaternary structure, component of the multifactor complex (MFC). The complex associates with pre-initiation complexes.

The protein localises to the cytoplasm. The protein resides in the nucleus. Functionally, component of the multifactor complex (MFC) involved in translation initiation. Required for the binding of MFC to the 40S ribosome. Required for the processing and nuclear export of the 60S and 40S ribosomal subunits. The sequence is that of Translation initiation factor RLI1 (RLI1) from Chaetomium thermophilum (strain DSM 1495 / CBS 144.50 / IMI 039719) (Thermochaetoides thermophila).